Here is a 142-residue protein sequence, read N- to C-terminus: Sec-independent protein translocase protein TatB (142 aa).

Residues 1 to 21 (MFDIGASELLVLVIVAIVVIG) traverse the membrane as a helical segment. The disordered stretch occupies residues 75–142 (RETAAQETAA…PAARPGSQQP (68 aa)). Residues 76–94 (ETAAQETAAAQGQTPAAAE) show a composition bias toward low complexity. The span at 123–133 (AKVEARVEEAP) shows a compositional bias: basic and acidic residues.

It belongs to the TatB family. As to quaternary structure, the Tat system comprises two distinct complexes: a TatABC complex, containing multiple copies of TatA, TatB and TatC subunits, and a separate TatA complex, containing only TatA subunits. Substrates initially bind to the TatABC complex, which probably triggers association of the separate TatA complex to form the active translocon.

Its subcellular location is the cell inner membrane. Part of the twin-arginine translocation (Tat) system that transports large folded proteins containing a characteristic twin-arginine motif in their signal peptide across membranes. Together with TatC, TatB is part of a receptor directly interacting with Tat signal peptides. TatB may form an oligomeric binding site that transiently accommodates folded Tat precursor proteins before their translocation. The sequence is that of Sec-independent protein translocase protein TatB from Novosphingobium aromaticivorans (strain ATCC 700278 / DSM 12444 / CCUG 56034 / CIP 105152 / NBRC 16084 / F199).